A 175-amino-acid polypeptide reads, in one-letter code: Protein OPG036 (175 aa).

This sequence belongs to the poxviridae OPG036 family.

It localises to the host nucleus. Functionally, plays a role in the inhibition of host innate immune response. Within the host nucleus, inhibits activation of interferon-beta promoter by inhibiting IRF3 activation. This chain is Protein OPG036 (OPG036), found in Homo sapiens (Human).